We begin with the raw amino-acid sequence, 226 residues long: Ribonuclease 3 (226 aa).

Positions 6–128 (INRLQRKLGY…LIGAIFLDSD (123 aa)) constitute an RNase III domain. Glu-41 contributes to the Mg(2+) binding site. Asp-45 is an active-site residue. Mg(2+) contacts are provided by Asp-114 and Glu-117. Glu-117 is a catalytic residue. Positions 155–225 (DPKTRLQEYL…AEQALKQLEL (71 aa)) constitute a DRBM domain.

It belongs to the ribonuclease III family. Homodimer. It depends on Mg(2+) as a cofactor.

It is found in the cytoplasm. The catalysed reaction is Endonucleolytic cleavage to 5'-phosphomonoester.. Functionally, digests double-stranded RNA. Involved in the processing of primary rRNA transcript to yield the immediate precursors to the large and small rRNAs (23S and 16S). Processes some mRNAs, and tRNAs when they are encoded in the rRNA operon. Processes pre-crRNA and tracrRNA of type II CRISPR loci if present in the organism. The polypeptide is Ribonuclease 3 (Photorhabdus laumondii subsp. laumondii (strain DSM 15139 / CIP 105565 / TT01) (Photorhabdus luminescens subsp. laumondii)).